A 932-amino-acid polypeptide reads, in one-letter code: LPS-assembly protein LptD (932 aa).

A signal peptide spans 1 to 33 (MALKSPAFRRKFPLLVTGGLLALQPLATSYAVA). Residues 54–87 (PVNNLPPRPVHEGAAVSSGTEAASEGETADRPML) form a disordered region.

The protein belongs to the LptD family. In terms of assembly, component of the lipopolysaccharide transport and assembly complex. Interacts with LptE and LptA.

It localises to the cell outer membrane. Together with LptE, is involved in the assembly of lipopolysaccharide (LPS) at the surface of the outer membrane. This Pseudomonas putida (strain GB-1) protein is LPS-assembly protein LptD.